A 542-amino-acid polypeptide reads, in one-letter code: Chaperonin GroEL 2 (542 aa).

Residues 30 to 33 (TLGP), K51, 87 to 91 (DGTTT), G415, and D494 each bind ATP.

It belongs to the chaperonin (HSP60) family. As to quaternary structure, forms a cylinder of 14 subunits composed of two heptameric rings stacked back-to-back. Interacts with the co-chaperonin GroES.

The protein resides in the cytoplasm. The catalysed reaction is ATP + H2O + a folded polypeptide = ADP + phosphate + an unfolded polypeptide.. Functionally, together with its co-chaperonin GroES, plays an essential role in assisting protein folding. The GroEL-GroES system forms a nano-cage that allows encapsulation of the non-native substrate proteins and provides a physical environment optimized to promote and accelerate protein folding. This chain is Chaperonin GroEL 2, found in Syntrophobacter fumaroxidans (strain DSM 10017 / MPOB).